The following is a 238-amino-acid chain: UPF0173 metal-dependent hydrolase Helmi_16730 (238 aa).

Belongs to the UPF0173 family.

This is UPF0173 metal-dependent hydrolase Helmi_16730 from Heliobacterium modesticaldum (strain ATCC 51547 / Ice1).